The following is a 303-amino-acid chain: Eukaryotic translation initiation factor 3 subunit G (303 aa).

The interval 1 to 38 is disordered; that stretch reads MATQTKHDWADDEDLEETTTTTAPTTDLPPPQKIQNKD. The RRM domain maps to 223–301; that stretch reads ATLRVTNVSE…LILRVEFAKK (79 aa).

Belongs to the eIF-3 subunit G family. Component of the eukaryotic translation initiation factor 3 (eIF-3) complex.

It is found in the cytoplasm. RNA-binding component of the eukaryotic translation initiation factor 3 (eIF-3) complex, which is involved in protein synthesis of a specialized repertoire of mRNAs and, together with other initiation factors, stimulates binding of mRNA and methionyl-tRNAi to the 40S ribosome. The eIF-3 complex specifically targets and initiates translation of a subset of mRNAs involved in cell proliferation. This subunit can bind 18S rRNA. The chain is Eukaryotic translation initiation factor 3 subunit G from Chaetomium globosum (strain ATCC 6205 / CBS 148.51 / DSM 1962 / NBRC 6347 / NRRL 1970) (Soil fungus).